A 65-amino-acid chain; its full sequence is Large ribosomal subunit protein bL35 (65 aa).

This sequence belongs to the bacterial ribosomal protein bL35 family.

The chain is Large ribosomal subunit protein bL35 from Paraburkholderia phytofirmans (strain DSM 17436 / LMG 22146 / PsJN) (Burkholderia phytofirmans).